Here is a 4776-residue protein sequence, read N- to C-terminus: Pneumococcal serine-rich repeat protein (4776 aa).

The signal sequence occupies residues 1–72 (MTETVEDKVS…VVLGTISTSN (72 aa)). 13 O-linked (GlcNAc...) serine glycosylation sites follow: Ser73, Ser75, Ser76, Ser78, Ser80, Ser82, Ser94, Ser100, Ser108, Ser110, Ser118, Ser120, and Ser121. Residues 73–121 (SASSTSLSASESASTSASESASTSASTSASTSASESASTSASTSISASS) are serine-rich repeat region 1, SRR1. A disordered region spans residues 86-112 (STSASESASTSASTSASTSASESASTS). Residues 122-166 (TVVGSQTAAATEATAKKVEEDRKKPASDYVASVTNVNLQSYAKRR) form a self aggregating domain region. A basic region, BR region spans residues 122 to 394 (TVVGSQTAAA…QSKSLSVSAS (273 aa)). Positions 164-168 (KRRKR) match the Host furin cleavage recognition motif. The keratin 10-binding domain, cell-type specific binding to lung-derived cells stretch occupies residues 273–341 (TQTMLTLGSD…GYGLTSSWTV (69 aa)). The interval 395 to 4712 (QSASASASTS…ASTSASASAS (4318 aa)) is serine-rich repeat region 2, SRR2. 27 disordered regions span residues 481–627 (ASTS…STSA), 861–889 (ASAS…SAST), 925–965 (ASAS…SASA), 1052–1085 (SAST…SASA), 1123–1153 (ASAS…STSA), 1171–1199 (ASAS…STSA), 1311–1357 (ASES…SAST), 1671–1731 (ASES…SESA), 1792–1863 (SASE…STSA), 2105–2133 (ASAS…SAST), 2169–2209 (ASAS…SASA), 2296–2329 (SAST…SASA), 2367–2397 (ASAS…STSA), 2415–2443 (ASAS…STSA), 2571–2631 (ASES…SESA), 2737–2805 (ESAS…STSA), 2855–3113 (ASAS…STSA), 3347–3375 (ASAS…SAST), 3411–3451 (ASAS…SASA), 3538–3571 (SAST…SASA), 3609–3639 (ASAS…STSA), 3657–3685 (ASAS…STSA), 3797–3843 (ASES…SAST), 4167–4197 (ASAS…STSA), 4215–4243 (ASAS…STSA), 4355–4401 (ASES…SAST), and 4706–4747 (SASA…GTES). The segment covering 4715-4747 (VSNSANHSNSQVGNTSGSTGKSQKELPNTGTES) has biased composition (polar residues). The short motif at 4740-4744 (LPNTG) is the LPXTG sorting signal element. Thr4743 bears the Pentaglycyl murein peptidoglycan amidated threonine mark. The propeptide at 4744-4776 (GTESSIGSVLLGVLAAVTGIGLVAKRRKRDEEE) is removed by sortase.

This sequence belongs to the serine-rich repeat protein (SRRP) family. In terms of assembly, binds to human and mouse protein keratin 10 (KRT10). In terms of processing, glycosylated. Only truncated substrates greater than 25 residues long are glycosylated by the Gtf1-Gtf2 complex in vitro; only Ser residues have been seen to be glycosylated. Based on electrophoretic mobility it is probable that most of the Ser residues in SSR1 and SSR2 are O-GlcNAcylated. Subsequent glycosylation by up to 7 sugar transferases (Gtf3 and GlyAT, GlyB, GlyD, GlyE, GlyF and GlyG) is able to generate very high sugar polymorphism. Can be cleaved by human furin protease; this fragment contributes to self-aggregation and possibly biofilm formation in vitro.

It localises to the secreted. Its subcellular location is the cell wall. The protein resides in the cell surface. Protein that allows bacteria to adhere to mammalian host cells. Required for full virulence in mouse infection models when infected intranasally. Required for adhesion to host cells in vitro and for persistence in the lower respiratory tract. Binds host keratin 10 (KRT10) on lung cells which mediates adhesion via the C-terminus of the basic region (BR, residues 273-341); glycosylation of either protein is not required for the interaction. A region in the N-terminus (residues 122-166) self aggregates, contributing to mature biofilm formation. The basic region (BR, residues 187-385) also self aggregates; the BR binds DNA which enhances self aggregation. The protein is Pneumococcal serine-rich repeat protein of Streptococcus pneumoniae serotype 4 (strain ATCC BAA-334 / TIGR4).